We begin with the raw amino-acid sequence, 131 residues long: Large ribosomal subunit protein bL17 (131 aa).

This sequence belongs to the bacterial ribosomal protein bL17 family. Part of the 50S ribosomal subunit. Contacts protein L32.

In Shewanella baltica (strain OS223), this protein is Large ribosomal subunit protein bL17.